The following is a 907-amino-acid chain: Probable disease resistance protein At1g58390 (907 aa).

An NB-ARC domain is found at 144-456; the sequence is QGDRQREMRQ…AEGISTAEDY (313 aa). 190 to 197 lines the ATP pocket; sequence GMGGLGKT. LRR repeat units lie at residues 608–631 and 843–868; these read LIHL…LGNL and MPLL…RFIY.

This sequence belongs to the disease resistance NB-LRR family.

Its function is as follows. Possible disease resistance protein. The protein is Probable disease resistance protein At1g58390 of Arabidopsis thaliana (Mouse-ear cress).